Here is a 754-residue protein sequence, read N- to C-terminus: MTELGDDPDVEALAAARREEALATNQRRLLVLAGDRDAGIDAAFDAVRGADVPDDEVTFVTAREGFRFHRVEPKRASSLLGTTRTLVVLDAHEEFSANALGRVAGAVDGGGLLVLLTPSLDDWPTRRDSFDERLAVPPFSVADVTGRFRGRLVSTLRDHPGVALVDLDSGTVERDGAYRQGISFDAAPPRVPTEKDRRSPRRAYEDCLTADQSEALAALEALTEPGTAVVVEADRGRGKSSAAGLAAGSLAAEGKDVVVTAPGERNAAEVFARAERLLSELGALRGGGAGDFDIAADRGGRVRYVPPTEAGDAAADADALVVDEAAALPVGLLESFLAAPAVAFCTTVRGYEGAGRGFTVRFRDRLDDADREVTDARLDDPIRYAAGDPVESWTFRALLLDARPPVDQLVADATPETVSYRALSPDDLLADEHLLREAFGLLVLAHYRTEPDDLARLLDAPNLTLRALTHEGRVVSVALLAREGGLDPDTRRQMYDGGRIRGNMLPDVFTSQLRDEGAGVPVGYRVMRIATHHAVRSSGLGSRLLTELRDEFADDADYLGVGFGATPELLSFWRDNGYGTVHLSTTRNDTSGEYSALMTRPLSSAGRDLRDRHANWFLGRVGDVLGDALSDLDADVARAALAAVDSFLSPDLSEYEWRVVVGASYGPGLYTTAPGAFRRLGLAHLTNPERASLTPREERLVVRKVLQTHPWDAVADELDFHSTAGAMRALGDAYEPLVDEYGTDAAREERERFR.

Residues 181-202 are disordered; sequence GISFDAAPPRVPTEKDRRSPRR. A compositionally biased stretch (basic and acidic residues) spans 192–202; sequence PTEKDRRSPRR. ATP contacts are provided by residues Gln-212, 236 to 245, and Arg-383; that span reads GRGKSSAAGL. An N-acetyltransferase domain is found at 418–603; it reads VSYRALSPDD…YSALMTRPLS (186 aa). Acetyl-CoA contacts are provided by residues 529 to 531, 536 to 542, and Glu-568; these read IAT and RSSGLGS.

It belongs to the RNA cytidine acetyltransferase family. TmcA subfamily.

The protein localises to the cytoplasm. The catalysed reaction is cytidine(34) in elongator tRNA(Met) + acetyl-CoA + ATP + H2O = N(4)-acetylcytidine(34) in elongator tRNA(Met) + ADP + phosphate + CoA + H(+). In terms of biological role, catalyzes the formation of N(4)-acetylcytidine (ac(4)C) at the wobble position of tRNA(Met), by using acetyl-CoA as an acetyl donor and ATP (or GTP). This chain is tRNA(Met) cytidine acetyltransferase TmcA, found in Haloferax volcanii (strain ATCC 29605 / DSM 3757 / JCM 8879 / NBRC 14742 / NCIMB 2012 / VKM B-1768 / DS2) (Halobacterium volcanii).